The sequence spans 478 residues: Sulfate adenylyltransferase subunit 1 (478 aa).

The tr-type G domain occupies 24–240 (KSLLRFLTCG…VLENVDIDAD (217 aa)). The tract at residues 33 to 40 (GSVDDGKS) is G1. 33 to 40 (GSVDDGKS) contributes to the GTP binding site. The segment at 91–95 (GITID) is G2. The interval 112–115 (DTPG) is G3. Residues 112 to 116 (DTPGH) and 167 to 170 (NKMD) contribute to the GTP site. The interval 167 to 170 (NKMD) is G4. Residues 206-208 (SAL) form a G5 region.

Belongs to the TRAFAC class translation factor GTPase superfamily. Classic translation factor GTPase family. CysN/NodQ subfamily. In terms of assembly, heterodimer composed of CysD, the smaller subunit, and CysN.

The catalysed reaction is sulfate + ATP + H(+) = adenosine 5'-phosphosulfate + diphosphate. It participates in sulfur metabolism; hydrogen sulfide biosynthesis; sulfite from sulfate: step 1/3. In terms of biological role, with CysD forms the ATP sulfurylase (ATPS) that catalyzes the adenylation of sulfate producing adenosine 5'-phosphosulfate (APS) and diphosphate, the first enzymatic step in sulfur assimilation pathway. APS synthesis involves the formation of a high-energy phosphoric-sulfuric acid anhydride bond driven by GTP hydrolysis by CysN coupled to ATP hydrolysis by CysD. In Aliivibrio fischeri (strain MJ11) (Vibrio fischeri), this protein is Sulfate adenylyltransferase subunit 1.